Reading from the N-terminus, the 213-residue chain is Uridine kinase (213 aa).

15-22 (GGSGSGKT) is an ATP binding site.

This sequence belongs to the uridine kinase family.

Its subcellular location is the cytoplasm. It catalyses the reaction uridine + ATP = UMP + ADP + H(+). The enzyme catalyses cytidine + ATP = CMP + ADP + H(+). It functions in the pathway pyrimidine metabolism; CTP biosynthesis via salvage pathway; CTP from cytidine: step 1/3. It participates in pyrimidine metabolism; UMP biosynthesis via salvage pathway; UMP from uridine: step 1/1. In Ligilactobacillus salivarius (strain UCC118) (Lactobacillus salivarius), this protein is Uridine kinase.